Reading from the N-terminus, the 354-residue chain is Uroporphyrinogen decarboxylase (354 aa).

Substrate is bound by residues 27 to 31 (RQAGR), Asp77, Tyr154, Thr209, and His327.

Belongs to the uroporphyrinogen decarboxylase family. Homodimer.

It localises to the cytoplasm. The catalysed reaction is uroporphyrinogen III + 4 H(+) = coproporphyrinogen III + 4 CO2. The protein operates within porphyrin-containing compound metabolism; protoporphyrin-IX biosynthesis; coproporphyrinogen-III from 5-aminolevulinate: step 4/4. In terms of biological role, catalyzes the decarboxylation of four acetate groups of uroporphyrinogen-III to yield coproporphyrinogen-III. This is Uroporphyrinogen decarboxylase from Salmonella newport (strain SL254).